The following is a 597-amino-acid chain: Arginine--tRNA ligase (597 aa).

A 'HIGH' region motif is present at residues 137 to 147 (PNIAKEMHVGH).

Belongs to the class-I aminoacyl-tRNA synthetase family. In terms of assembly, monomer.

It is found in the cytoplasm. It catalyses the reaction tRNA(Arg) + L-arginine + ATP = L-arginyl-tRNA(Arg) + AMP + diphosphate. The protein is Arginine--tRNA ligase of Parasynechococcus marenigrum (strain WH8102).